Consider the following 343-residue polypeptide: Ribosomal RNA-processing protein 8 (343 aa).

Positions 1–123 (MGKKRKITDE…NDDVAAAPEE (123 aa)) are disordered. The segment covering 7-33 (ITDEKDAQHVPAEKREKVENWLKKSTE) has biased composition (basic and acidic residues). 2 stretches are compositionally biased toward basic residues: residues 45–59 (KKKRPWRNKVRKLAA) and 89–101 (KKKRKRGPKKKKF). The span at 112–123 (TENDDVAAAPEE) shows a compositional bias: acidic residues. Residues His169, Gly204, Asp224, Asp236, Met237, and Cys253 each coordinate S-adenosyl-L-methionine.

It belongs to the methyltransferase superfamily. RRP8 family.

Its subcellular location is the nucleus. The protein resides in the nucleolus. Probable methyltransferase required to silence rDNA. Involved in regulation of antisense ribosomal siRNA production. Required for the N1-methyladenosine modification of 26S rRNAs. The polypeptide is Ribosomal RNA-processing protein 8 (rrp-8) (Caenorhabditis elegans).